The chain runs to 485 residues: Amyloid beta A4 precursor protein-binding family B member 1-interacting protein (485 aa).

Residues Gln84 to Phe107 are compositionally biased toward polar residues. A disordered region spans residues Gln84–Ala157. Over residues Leu125–Pro147 the composition is skewed to pro residues. Residues Lys175–Lys262 form the Ras-associating domain. In terms of domain architecture, PH spans Val305–Tyr414.

Belongs to the MRL family.

The protein resides in the cell membrane. It is found in the cytoplasm. It localises to the cytoskeleton. Its function is as follows. Appears to function in the signal transduction from Ras activation to actin cytoskeletal remodeling. The chain is Amyloid beta A4 precursor protein-binding family B member 1-interacting protein (APBB1IP) from Gallus gallus (Chicken).